Reading from the N-terminus, the 359-residue chain is MPTIEVKSSNPYQVRIDKQLNTEIVTTAQLSGAENVAIITQPPLLERAGTLEKMLAQAGLASHVLAVPDAETGKTLEVAGRCWDQLGEWGFSRSDLIIGFGGGAATDLAGFVAAAWMRGIKVIQVPTTLLAMVDAAVGGKTGINTAAGKNLVGAFHEPIAVFIDVDHLDSLPQDEIIAGSAEIIKTGFIADPRILELYEKDPAACLLKDGHLPELIARSIAVKSKVVSQDLKESGLREILNYGHTFGHAVELRENFSWRHGNAVAVGMVFVAELANIRGLISDELVERHRKILKSIGLPTSYSQGHFEELHQGMKHDKKNRNSMIRFVALRDISDVVRLEGPTDEELFQAYSRLALEMS.

NAD(+) contacts are provided by residues D69–K74, G103–D107, T127–T128, K140, and K149. Zn(2+)-binding residues include E182, H244, and H260.

The protein belongs to the sugar phosphate cyclases superfamily. Dehydroquinate synthase family. Co(2+) serves as cofactor. Requires Zn(2+) as cofactor. It depends on NAD(+) as a cofactor.

The protein localises to the cytoplasm. The catalysed reaction is 7-phospho-2-dehydro-3-deoxy-D-arabino-heptonate = 3-dehydroquinate + phosphate. The protein operates within metabolic intermediate biosynthesis; chorismate biosynthesis; chorismate from D-erythrose 4-phosphate and phosphoenolpyruvate: step 2/7. Catalyzes the conversion of 3-deoxy-D-arabino-heptulosonate 7-phosphate (DAHP) to dehydroquinate (DHQ). The sequence is that of 3-dehydroquinate synthase from Corynebacterium diphtheriae (strain ATCC 700971 / NCTC 13129 / Biotype gravis).